The following is a 944-amino-acid chain: Protein translocase subunit SecA (944 aa).

Residues glutamine 96, 114–118 (GEGKT), and aspartate 554 each bind ATP.

This sequence belongs to the SecA family. In terms of assembly, monomer and homodimer. Part of the essential Sec protein translocation apparatus which comprises SecA, SecYEG and auxiliary proteins SecDF. Other proteins may also be involved.

Its subcellular location is the cell inner membrane. It is found in the cytoplasm. The catalysed reaction is ATP + H2O + cellular proteinSide 1 = ADP + phosphate + cellular proteinSide 2.. Functionally, part of the Sec protein translocase complex. Interacts with the SecYEG preprotein conducting channel. Has a central role in coupling the hydrolysis of ATP to the transfer of proteins into and across the cell membrane, serving as an ATP-driven molecular motor driving the stepwise translocation of polypeptide chains across the membrane. In Hydrogenobaculum sp. (strain Y04AAS1), this protein is Protein translocase subunit SecA.